The chain runs to 205 residues: RNA pyrophosphohydrolase (205 aa).

Residues 6–149 form the Nudix hydrolase domain; the sequence is GFRPNVGIVL…KRGVYARALR (144 aa). The Nudix box motif lies at 38–59; that stretch reads GGMNTDETPVEAMYRELREETG. A disordered region spans residues 178-205; it reads GSSAAGHDRPRKRPRKRGGVLPVRINND. Residues 186 to 195 are compositionally biased toward basic residues; it reads RPRKRPRKRG.

This sequence belongs to the Nudix hydrolase family. RppH subfamily. The cofactor is a divalent metal cation.

Accelerates the degradation of transcripts by removing pyrophosphate from the 5'-end of triphosphorylated RNA, leading to a more labile monophosphorylated state that can stimulate subsequent ribonuclease cleavage. This chain is RNA pyrophosphohydrolase, found in Xanthomonas campestris pv. campestris (strain 8004).